The primary structure comprises 227 residues: Trypsin (227 aa).

In terms of domain architecture, Peptidase S1 spans 1–223; that stretch reads IVGGEDANVQ…YYDVLMEQIN (223 aa). An intrachain disulfide couples Cys-27 to Cys-43. Catalysis depends on charge relay system residues His-42 and Asp-88. Disulfide bonds link Cys-150-Cys-164 and Cys-175-Cys-199. Catalysis depends on Ser-179, which acts as the Charge relay system.

This sequence belongs to the peptidase S1 family.

It catalyses the reaction Preferential cleavage: Arg-|-Xaa, Lys-|-Xaa.. In Saccharopolyspora erythraea (Streptomyces erythraeus), this protein is Trypsin.